Reading from the N-terminus, the 64-residue chain is UPF0434 protein BOV_A0835 (64 aa).

The protein belongs to the UPF0434 family.

The protein is UPF0434 protein BOV_A0835 of Brucella ovis (strain ATCC 25840 / 63/290 / NCTC 10512).